Reading from the N-terminus, the 105-residue chain is Nucleoid-associated protein cu1912 (105 aa).

The protein belongs to the YbaB/EbfC family. In terms of assembly, homodimer.

The protein resides in the cytoplasm. The protein localises to the nucleoid. Functionally, binds to DNA and alters its conformation. May be involved in regulation of gene expression, nucleoid organization and DNA protection. The protein is Nucleoid-associated protein cu1912 of Corynebacterium urealyticum (strain ATCC 43042 / DSM 7109).